The following is a 313-amino-acid chain: Olfactory receptor 6E1 (313 aa).

N3 carries N-linked (GlcNAc...) asparagine glycosylation. 7 helical membrane-spanning segments follow: residues 25–45, 64–84, 96–116, 142–162, 192–212, 238–258, and 271–291; these read IFLG…LIIF, FAML…TNII, FLQA…LAVM, LVFC…SIVF, LVEF…LAVT, TCSS…FMYV, and KVVA…IYTL. A disulfide bridge connects residues C95 and C177.

The protein belongs to the G-protein coupled receptor 1 family.

The protein localises to the cell membrane. Functionally, odorant receptor. Activated by (-)-citronellal and to a lesser extent by (+)-citronellal. Not activated by carvone or limonene. The protein is Olfactory receptor 6E1 of Mus musculus (Mouse).